Reading from the N-terminus, the 84-residue chain is Cell division topological specificity factor (84 aa).

Belongs to the MinE family.

Its function is as follows. Prevents the cell division inhibition by proteins MinC and MinD at internal division sites while permitting inhibition at polar sites. This ensures cell division at the proper site by restricting the formation of a division septum at the midpoint of the long axis of the cell. This Burkholderia cenocepacia (strain ATCC BAA-245 / DSM 16553 / LMG 16656 / NCTC 13227 / J2315 / CF5610) (Burkholderia cepacia (strain J2315)) protein is Cell division topological specificity factor.